The primary structure comprises 424 residues: MIDIRLVRENPEKIRAALKNRCVDESILDELLELDKARREAISTSDRKKAERNKISSQIAKAKASGDEALAKELMEKAKDISVEVKELSEKAKKLDEEMRNKLLYIPNIPHESVPVGESEEDNVVVRKWGEPRQFDFDSLAHWDLGPNLGMMDFERAAKLSGSRFVILRKELARLERALINFMLDLHTREHGYEEVALPHLVKRETMQATGQLPKFEEEAYKTDPDDMFLIPTAEVPLVAQHRDEILNLNELPRKYTAYTPCYRREAGSYGKDVKGMIRVHQFDKVELVWFVHPDESYEALEKLTADAEEVLKRLGLPYRVVALCTGDLGFAAAKTYDIEVWLPSYNAYKEISSCSNVEDFQARRGNMRFRDKDNKLKYVHTLNGSGLAVGRTLVAIVENYQLPDGRIRVPEVLVPYMGTEVIG.

Residue 233–235 (TAE) participates in L-serine binding. ATP is bound by residues 264–266 (RRE) and valine 280. Glutamate 287 provides a ligand contact to L-serine. 351–354 (EISS) serves as a coordination point for ATP. Serine 386 lines the L-serine pocket.

It belongs to the class-II aminoacyl-tRNA synthetase family. Type-1 seryl-tRNA synthetase subfamily. Homodimer. The tRNA molecule binds across the dimer.

Its subcellular location is the cytoplasm. It carries out the reaction tRNA(Ser) + L-serine + ATP = L-seryl-tRNA(Ser) + AMP + diphosphate + H(+). The catalysed reaction is tRNA(Sec) + L-serine + ATP = L-seryl-tRNA(Sec) + AMP + diphosphate + H(+). It functions in the pathway aminoacyl-tRNA biosynthesis; selenocysteinyl-tRNA(Sec) biosynthesis; L-seryl-tRNA(Sec) from L-serine and tRNA(Sec): step 1/1. In terms of biological role, catalyzes the attachment of serine to tRNA(Ser). Is also able to aminoacylate tRNA(Sec) with serine, to form the misacylated tRNA L-seryl-tRNA(Sec), which will be further converted into selenocysteinyl-tRNA(Sec). The polypeptide is Serine--tRNA ligase (Kosmotoga olearia (strain ATCC BAA-1733 / DSM 21960 / TBF 19.5.1)).